Consider the following 1435-residue polypeptide: Gag-Pol polyprotein (1435 aa).

Glycine 2 carries the N-myristoyl glycine; by host lipid modification. Positions 7-31 (VLSGGELDKWEKIRLRPGGKKQYKL) are interaction with Gp41. The interval 8–43 (LSGGELDKWEKIRLRPGGKKQYKLKHIVWASRELER) is interaction with host CALM1. Residues 12–19 (ELDKWEKI) are interaction with host AP3D1. The tract at residues 14-33 (DKWEKIRLRPGGKKQYKLKH) is interaction with membrane phosphatidylinositol 4,5-bisphosphate and RNA. A Nuclear export signal motif is present at residues 16-22 (WEKIRLR). The Nuclear localization signal motif lies at 26 to 32 (KKQYKLK). An interaction with membrane phosphatidylinositol 4,5-bisphosphate region spans residues 73 to 77 (EELRS). The disordered stretch occupies residues 106–128 (EEQNKSKKKAQQAAADTGNNSQV). A Phosphotyrosine; by host modification is found at tyrosine 132. Serine 148 bears the Phosphoserine; by host MAPK1 mark. The interval 189–227 (NTVGGHQAAMQMLKETINEEAAEWDRLHPVHAGPIAPGQ) is interaction with human PPIA/CYPA and NUP153. Residues 277–363 (YSPTSILDIR…GGPGHKARVL (87 aa)) are dimerization/Multimerization of capsid protein p24. CCHC-type zinc fingers lie at residues 390–407 (VKCF…NCRA) and 411–428 (KGCW…DCTE). The disordered stretch occupies residues 444-464 (KAREFSSEQTRANSPTRRELQ). Residues 489-493 (PQITL) are dimerization of protease. The 70-residue stretch at 508 to 577 (KEALLDTGAD…TPVNIIGRNL (70 aa)) folds into the Peptidase A2 domain. Catalysis depends on aspartate 513, which acts as the For protease activity; shared with dimeric partner. Dimerization of protease regions lie at residues 537–543 (GIGGFIK) and 576–588 (NLLT…LNFP). The 191-residue stretch at 631 to 821 (EGKISKIGPE…PPFLWMGYEL (191 aa)) folds into the Reverse transcriptase domain. Mg(2+) is bound by residues aspartate 697, aspartate 772, and aspartate 773. The segment at 814 to 822 (FLWMGYELH) is RT 'primer grip'. Positions 985-1001 (WEAWWTEYWQATWIPEW) match the Tryptophan repeat motif motif. In terms of domain architecture, RNase H type-1 spans 1021-1144 (IIGAETFYVD…VDGLVSAGIR (124 aa)). Mg(2+) contacts are provided by aspartate 1030, glutamate 1065, aspartate 1085, and aspartate 1136. The Integrase-type zinc-finger motif lies at 1150-1191 (DGIDKAQEEHEKYHSNWRAMASDFNLPPVVAKEIVASCDKCQ). Histidine 1159, histidine 1163, cysteine 1187, and cysteine 1190 together coordinate Zn(2+). Residues 1201–1351 (VDCSPGIWQL…SAGERIVDII (151 aa)) form the Integrase catalytic domain. Mg(2+) is bound by residues aspartate 1211, aspartate 1263, and glutamate 1299. Residues 1370–1417 (FRVYYRDSRDPVWKGPAKLLWKGEGAVVIQDNSDIKVVPRRKAKIIRD) constitute a DNA-binding region (integrase-type).

In terms of assembly, homotrimer; further assembles as hexamers of trimers. Matrix protein p17: Interacts with gp41 (via C-terminus). Interacts with host CALM1; this interaction induces a conformational change in the Matrix protein, triggering exposure of the myristate group. Interacts with host AP3D1; this interaction allows the polyprotein trafficking to multivesicular bodies during virus assembly. Part of the pre-integration complex (PIC) which is composed of viral genome, matrix protein, Vpr and integrase. As to quaternary structure, homodimer; the homodimer further multimerizes as homohexamers or homopentamers. Interacts with human PPIA/CYPA; This interaction stabilizes the capsid. Interacts with human NUP153. Interacts with host PDZD8; this interaction stabilizes the capsid. Interacts with monkey TRIM5; this interaction destabilizes the capsid. Homodimer, whose active site consists of two apposed aspartic acid residues. In terms of assembly, heterodimer of p66 RT and p51 RT (RT p66/p51). Heterodimerization of RT is essential for DNA polymerase activity. The overall folding of the subdomains is similar in p66 RT and p51 RT but the spatial arrangements of the subdomains are dramatically different. As to quaternary structure, homotetramer; may further associate as a homohexadecamer. Part of the pre-integration complex (PIC) which is composed of viral genome, matrix protein, Vpr and integrase. Interacts with human SMARCB1/INI1 and human PSIP1/LEDGF isoform 1. Interacts with human KPNA3; this interaction might play a role in nuclear import of the pre-integration complex. Interacts with human NUP153; this interaction might play a role in nuclear import of the pre-integration complex. It depends on Mg(2+) as a cofactor. In terms of processing, specific enzymatic cleavages by the viral protease yield mature proteins. The protease is released by autocatalytic cleavage. The polyprotein is cleaved during and after budding, this process is termed maturation. Proteolytic cleavage of p66 RT removes the RNase H domain to yield the p51 RT subunit. Nucleocapsid protein p7 might be further cleaved after virus entry. Tyrosine phosphorylated presumably in the virion by a host kinase. Phosphorylation is apparently not a major regulator of membrane association. Post-translationally, phosphorylated possibly by host MAPK1; this phosphorylation is necessary for Pin1-mediated virion uncoating. In terms of processing, methylated by host PRMT6, impairing its function by reducing RNA annealing and the initiation of reverse transcription.

The protein localises to the host cell membrane. It localises to the host endosome. It is found in the host multivesicular body. Its subcellular location is the virion membrane. The protein resides in the host nucleus. The protein localises to the host cytoplasm. It localises to the virion. It carries out the reaction Specific for a P1 residue that is hydrophobic, and P1' variable, but often Pro.. The catalysed reaction is Endohydrolysis of RNA in RNA/DNA hybrids. Three different cleavage modes: 1. sequence-specific internal cleavage of RNA. Human immunodeficiency virus type 1 and Moloney murine leukemia virus enzymes prefer to cleave the RNA strand one nucleotide away from the RNA-DNA junction. 2. RNA 5'-end directed cleavage 13-19 nucleotides from the RNA end. 3. DNA 3'-end directed cleavage 15-20 nucleotides away from the primer terminus.. It catalyses the reaction 3'-end directed exonucleolytic cleavage of viral RNA-DNA hybrid.. The enzyme catalyses DNA(n) + a 2'-deoxyribonucleoside 5'-triphosphate = DNA(n+1) + diphosphate. With respect to regulation, protease: The viral protease is inhibited by many synthetic protease inhibitors (PIs), such as amprenavir, atazanavir, indinavir, loprinavir, nelfinavir, ritonavir and saquinavir. Use of protease inhibitors in tritherapy regimens permit more ambitious therapeutic strategies. Reverse transcriptase/ribonuclease H: RT can be inhibited either by nucleoside RT inhibitors (NRTIs) or by non nucleoside RT inhibitors (NNRTIs). NRTIs act as chain terminators, whereas NNRTIs inhibit DNA polymerization by binding a small hydrophobic pocket near the RT active site and inducing an allosteric change in this region. Classical NRTIs are abacavir, adefovir (PMEA), didanosine (ddI), lamivudine (3TC), stavudine (d4T), tenofovir (PMPA), zalcitabine (ddC), and zidovudine (AZT). Classical NNRTIs are atevirdine (BHAP U-87201E), delavirdine, efavirenz (DMP-266), emivirine (I-EBU), and nevirapine (BI-RG-587). The tritherapies used as a basic effective treatment of AIDS associate two NRTIs and one NNRTI. Mediates, with Gag polyprotein, the essential events in virion assembly, including binding the plasma membrane, making the protein-protein interactions necessary to create spherical particles, recruiting the viral Env proteins, and packaging the genomic RNA via direct interactions with the RNA packaging sequence (Psi). Gag-Pol polyprotein may regulate its own translation, by the binding genomic RNA in the 5'-UTR. At low concentration, the polyprotein would promote translation, whereas at high concentration, the polyprotein would encapsidate genomic RNA and then shut off translation. In terms of biological role, targets the polyprotein to the plasma membrane via a multipartite membrane-binding signal, that includes its myristoylated N-terminus. Matrix protein is part of the pre-integration complex. Implicated in the release from host cell mediated by Vpu. Binds to RNA. Its function is as follows. Forms the conical core that encapsulates the genomic RNA-nucleocapsid complex in the virion. Most core are conical, with only 7% tubular. The core is constituted by capsid protein hexamer subunits. The core is disassembled soon after virion entry. Host restriction factors such as TRIM5-alpha or TRIMCyp bind retroviral capsids and cause premature capsid disassembly, leading to blocks in reverse transcription. Capsid restriction by TRIM5 is one of the factors which restricts HIV-1 to the human species. Host PIN1 apparently facilitates the virion uncoating. On the other hand, interactions with PDZD8 or CYPA stabilize the capsid. Functionally, encapsulates and protects viral dimeric unspliced genomic RNA (gRNA). Binds these RNAs through its zinc fingers. Acts as a nucleic acid chaperone which is involved in rearangement of nucleic acid secondary structure during gRNA retrotranscription. Also facilitates template switch leading to recombination. As part of the polyprotein, participates in gRNA dimerization, packaging, tRNA incorporation and virion assembly. Aspartyl protease that mediates proteolytic cleavages of Gag and Gag-Pol polyproteins during or shortly after the release of the virion from the plasma membrane. Cleavages take place as an ordered, step-wise cascade to yield mature proteins. This process is called maturation. Displays maximal activity during the budding process just prior to particle release from the cell. Also cleaves Nef and Vif, probably concomitantly with viral structural proteins on maturation of virus particles. Hydrolyzes host EIF4GI and PABP1 in order to shut off the capped cellular mRNA translation. The resulting inhibition of cellular protein synthesis serves to ensure maximal viral gene expression and to evade host immune response. Also mediates cleavage of host YTHDF3. Mediates cleavage of host CARD8, thereby activating the CARD8 inflammasome, leading to the clearance of latent HIV-1 in patient CD4(+) T-cells after viral reactivation; in contrast, HIV-1 can evade CARD8-sensing when its protease remains inactive in infected cells prior to viral budding. In terms of biological role, multifunctional enzyme that converts the viral RNA genome into dsDNA in the cytoplasm, shortly after virus entry into the cell. This enzyme displays a DNA polymerase activity that can copy either DNA or RNA templates, and a ribonuclease H (RNase H) activity that cleaves the RNA strand of RNA-DNA heteroduplexes in a partially processive 3' to 5' endonucleasic mode. Conversion of viral genomic RNA into dsDNA requires many steps. A tRNA(3)-Lys binds to the primer-binding site (PBS) situated at the 5'-end of the viral RNA. RT uses the 3' end of the tRNA primer to perform a short round of RNA-dependent minus-strand DNA synthesis. The reading proceeds through the U5 region and ends after the repeated (R) region which is present at both ends of viral RNA. The portion of the RNA-DNA heteroduplex is digested by the RNase H, resulting in a ssDNA product attached to the tRNA primer. This ssDNA/tRNA hybridizes with the identical R region situated at the 3' end of viral RNA. This template exchange, known as minus-strand DNA strong stop transfer, can be either intra- or intermolecular. RT uses the 3' end of this newly synthesized short ssDNA to perform the RNA-dependent minus-strand DNA synthesis of the whole template. RNase H digests the RNA template except for two polypurine tracts (PPTs) situated at the 5'-end and near the center of the genome. It is not clear if both polymerase and RNase H activities are simultaneous. RNase H probably can proceed both in a polymerase-dependent (RNA cut into small fragments by the same RT performing DNA synthesis) and a polymerase-independent mode (cleavage of remaining RNA fragments by free RTs). Secondly, RT performs DNA-directed plus-strand DNA synthesis using the PPTs that have not been removed by RNase H as primers. PPTs and tRNA primers are then removed by RNase H. The 3' and 5' ssDNA PBS regions hybridize to form a circular dsDNA intermediate. Strand displacement synthesis by RT to the PBS and PPT ends produces a blunt ended, linear dsDNA copy of the viral genome that includes long terminal repeats (LTRs) at both ends. Its function is as follows. Catalyzes viral DNA integration into the host chromosome, by performing a series of DNA cutting and joining reactions. This enzyme activity takes place after virion entry into a cell and reverse transcription of the RNA genome in dsDNA. The first step in the integration process is 3' processing. This step requires a complex comprising the viral genome, matrix protein, Vpr and integrase. This complex is called the pre-integration complex (PIC). The integrase protein removes 2 nucleotides from each 3' end of the viral DNA, leaving recessed CA OH's at the 3' ends. In the second step, the PIC enters cell nucleus. This process is mediated through integrase and Vpr proteins, and allows the virus to infect a non dividing cell. This ability to enter the nucleus is specific of lentiviruses, other retroviruses cannot and rely on cell division to access cell chromosomes. In the third step, termed strand transfer, the integrase protein joins the previously processed 3' ends to the 5' ends of strands of target cellular DNA at the site of integration. The 5'-ends are produced by integrase-catalyzed staggered cuts, 5 bp apart. A Y-shaped, gapped, recombination intermediate results, with the 5'-ends of the viral DNA strands and the 3' ends of target DNA strands remaining unjoined, flanking a gap of 5 bp. The last step is viral DNA integration into host chromosome. This involves host DNA repair synthesis in which the 5 bp gaps between the unjoined strands are filled in and then ligated. Since this process occurs at both cuts flanking the HIV genome, a 5 bp duplication of host DNA is produced at the ends of HIV-1 integration. Alternatively, Integrase may catalyze the excision of viral DNA just after strand transfer, this is termed disintegration. The polypeptide is Gag-Pol polyprotein (gag-pol) (Human immunodeficiency virus type 1 group M subtype B (isolate NY5) (HIV-1)).